The primary structure comprises 234 residues: MSWRADILTLFPNMFPGPLGFSLAGRALERGIWSCEAHDLRQHGLGRHRAVDDTPFGGGAGMVMRADVLDTALSALPALDGRPVVYPTPRGRRISHEDAERLSSGPGVVVLCGRFEGVDERVLEKHDIEQLCMGDVVLSGGEIPALTLLDACVRLLPGVMGSDVSGQDESFADGLLEYPQYTKPAVWDGRDVPDILLSGNHGAIARWRHEQSIAVTKARRPDLWDAYLARQQVH.

An S-adenosyl-L-methionine-binding site is contributed by Gly113.

It belongs to the RNA methyltransferase TrmD family. As to quaternary structure, homodimer.

It is found in the cytoplasm. It catalyses the reaction guanosine(37) in tRNA + S-adenosyl-L-methionine = N(1)-methylguanosine(37) in tRNA + S-adenosyl-L-homocysteine + H(+). Specifically methylates guanosine-37 in various tRNAs. This is tRNA (guanine-N(1)-)-methyltransferase from Gluconobacter oxydans (strain 621H) (Gluconobacter suboxydans).